A 245-amino-acid chain; its full sequence is tRNA1(Val) (adenine(37)-N6)-methyltransferase (245 aa).

Belongs to the methyltransferase superfamily. tRNA (adenine-N(6)-)-methyltransferase family.

Its subcellular location is the cytoplasm. The catalysed reaction is adenosine(37) in tRNA1(Val) + S-adenosyl-L-methionine = N(6)-methyladenosine(37) in tRNA1(Val) + S-adenosyl-L-homocysteine + H(+). Functionally, specifically methylates the adenine in position 37 of tRNA(1)(Val) (anticodon cmo5UAC). This Erwinia tasmaniensis (strain DSM 17950 / CFBP 7177 / CIP 109463 / NCPPB 4357 / Et1/99) protein is tRNA1(Val) (adenine(37)-N6)-methyltransferase.